The following is a 232-amino-acid chain: MKVLAIKLVDYREWTERLGYDREWLIQKIQNKFMMKIHEIASQYSTFPLQLRFDNFLMIVDGITNTQLIYMINDMQENLPVGIKTCLGYGKTPLEAQWNASVCLNNKEDKFKEYVDEKIAALHFDINFNTEALKYTSLYDSFLEITNIYVDLSRFLYKIGGILQYLGGDNYLGFVSTNSVNKVIEKFSDDNKIKVGIGIGQNARTAIKLATTSLEKIRNNREKTWHIEEEYH.

Belongs to the archaeal-type GTP cyclohydrolase family.

The enzyme catalyses GTP + 3 H2O = 2-amino-5-formylamino-6-(5-phospho-D-ribosylamino)pyrimidin-4(3H)-one + 2 phosphate + 2 H(+). In terms of biological role, catalyzes the formation of 2-amino-5-formylamino-6-ribofuranosylamino-4(3H)-pyrimidinone ribonucleotide monophosphate and inorganic phosphate from GTP. Also has an independent pyrophosphate phosphohydrolase activity. The sequence is that of GTP cyclohydrolase III from Saccharolobus islandicus (strain Y.G.57.14 / Yellowstone #1) (Sulfolobus islandicus).